The chain runs to 1253 residues: Cytoplasmic FMR1-interacting protein 1 homolog (1253 aa).

This sequence belongs to the CYFIP family.

The protein resides in the cytoplasm. The protein localises to the perinuclear region. It is found in the cell projection. It localises to the lamellipodium. Its subcellular location is the ruffle. The protein resides in the synapse. The protein localises to the synaptosome. Involved in formation of membrane ruffles and lamellipodia protrusions and in axon outgrowth. Binds to F-actin but not to RNA. The chain is Cytoplasmic FMR1-interacting protein 1 homolog from Danio rerio (Zebrafish).